The primary structure comprises 346 residues: Zinc-type alcohol dehydrogenase-like protein C1773.06c (346 aa).

It belongs to the zinc-containing alcohol dehydrogenase family. Quinone oxidoreductase subfamily.

The protein localises to the cytoplasm. The polypeptide is Zinc-type alcohol dehydrogenase-like protein C1773.06c (Schizosaccharomyces pombe (strain 972 / ATCC 24843) (Fission yeast)).